We begin with the raw amino-acid sequence, 61 residues long: UPF0434 protein PSEEN1604 (61 aa).

Belongs to the UPF0434 family.

The sequence is that of UPF0434 protein PSEEN1604 from Pseudomonas entomophila (strain L48).